A 146-amino-acid polypeptide reads, in one-letter code: Large ribosomal subunit protein uL15 (146 aa).

Positions 1-51 (MKLHELQPAAGSRKVRNRVGRGTSSGNGKTAGRGQKGQKARSGGGVRLGFE) are disordered. Composition is skewed to gly residues over residues 23-35 (TSSG…GRGQ) and 42-51 (SGGGVRLGFE).

The protein belongs to the universal ribosomal protein uL15 family. As to quaternary structure, part of the 50S ribosomal subunit.

Binds to the 23S rRNA. In Streptococcus gordonii (strain Challis / ATCC 35105 / BCRC 15272 / CH1 / DL1 / V288), this protein is Large ribosomal subunit protein uL15.